The following is a 165-amino-acid chain: Neurotrophin-3 (165 aa).

A signal peptide spans 1-3 (IQS). Residues 4–119 (TSMDQGSLTE…VLNRTSRRKR (116 aa)) constitute a propeptide that is removed on maturation. N112 carries an N-linked (GlcNAc...) asparagine glycan.

The protein belongs to the NGF-beta family.

The protein resides in the secreted. In terms of biological role, seems to promote the survival of visceral and proprioceptive sensory neurons. This chain is Neurotrophin-3 (NTF3), found in Calabaria reinhardtii (Calabar boa).